Consider the following 334-residue polypeptide: Putative 2-hydroxyacid dehydrogenase UNK4.10 (334 aa).

NAD(+) is bound by residues 166-167, 244-246, and D270; these read GI and TAR. R246 is a catalytic residue. The active site involves E275. H293 acts as the Proton donor in catalysis. An NAD(+)-binding site is contributed by 293-296; it reads HLGT.

Belongs to the D-isomer specific 2-hydroxyacid dehydrogenase family.

The polypeptide is Putative 2-hydroxyacid dehydrogenase UNK4.10 (Schizosaccharomyces pombe (strain 972 / ATCC 24843) (Fission yeast)).